Reading from the N-terminus, the 107-residue chain is Integration host factor subunit beta (107 aa).

The interval 55–107 (RRPARVGRNPKSGEKVQVPEKHVPHFKPGKELRERVDGRAGEPLKNDEPEDAQ) is disordered. The segment covering 65–101 (KSGEKVQVPEKHVPHFKPGKELRERVDGRAGEPLKND) has biased composition (basic and acidic residues).

Belongs to the bacterial histone-like protein family. Heterodimer of an alpha and a beta chain.

Functionally, this protein is one of the two subunits of integration host factor, a specific DNA-binding protein that functions in genetic recombination as well as in transcriptional and translational control. The sequence is that of Integration host factor subunit beta from Burkholderia pseudomallei (strain K96243).